A 280-amino-acid polypeptide reads, in one-letter code: MLSKAHAKINLSLDVIGKRKDGYHLLKMLMQTIDLYDLIEIKKIKKDIIIDCDREYIPKDRRNLAYKAATLFLDRYNIDSGVRINITKNIPVAAGLAGGSTDAATVLKIMRDIFEPDISNEELKEIALDIGADVPFCIEGGTALCEGIGEKITPIKNFKNHILVLVKPNFGLSTKDVYNNLKVEKIYIHPNTTKLIQSIEEDNLKSVARNMRNVLENVTLRKYKALNSIKSNFIELGALGSMMSGSGPSVFGLFDDMLKAQICYDNMREKYKEVFITRTI.

The active site involves lysine 8. An ATP-binding site is contributed by proline 91–threonine 101. The active site involves aspartate 133.

The protein belongs to the GHMP kinase family. IspE subfamily.

The catalysed reaction is 4-CDP-2-C-methyl-D-erythritol + ATP = 4-CDP-2-C-methyl-D-erythritol 2-phosphate + ADP + H(+). It participates in isoprenoid biosynthesis; isopentenyl diphosphate biosynthesis via DXP pathway; isopentenyl diphosphate from 1-deoxy-D-xylulose 5-phosphate: step 3/6. Catalyzes the phosphorylation of the position 2 hydroxy group of 4-diphosphocytidyl-2C-methyl-D-erythritol. The chain is 4-diphosphocytidyl-2-C-methyl-D-erythritol kinase from Clostridium botulinum (strain ATCC 19397 / Type A).